The chain runs to 403 residues: S-adenosylmethionine:tRNA ribosyltransferase-isomerase (403 aa).

Belongs to the QueA family. In terms of assembly, monomer.

It is found in the cytoplasm. It carries out the reaction 7-aminomethyl-7-carbaguanosine(34) in tRNA + S-adenosyl-L-methionine = epoxyqueuosine(34) in tRNA + adenine + L-methionine + 2 H(+). The protein operates within tRNA modification; tRNA-queuosine biosynthesis. In terms of biological role, transfers and isomerizes the ribose moiety from AdoMet to the 7-aminomethyl group of 7-deazaguanine (preQ1-tRNA) to give epoxyqueuosine (oQ-tRNA). The sequence is that of S-adenosylmethionine:tRNA ribosyltransferase-isomerase from Psychrobacter arcticus (strain DSM 17307 / VKM B-2377 / 273-4).